Here is a 148-residue protein sequence, read N- to C-terminus: Small ribosomal subunit protein uS15 (148 aa).

Belongs to the universal ribosomal protein uS15 family.

This Encephalitozoon cuniculi (strain GB-M1) (Microsporidian parasite) protein is Small ribosomal subunit protein uS15 (RPS13).